The sequence spans 79 residues: Protein RALF-like 35 (79 aa).

The signal sequence occupies residues Met-1–Gly-29. Disulfide bonds link Cys-45–Cys-52 and Cys-66–Cys-72. A glycan (N-linked (GlcNAc...) asparagine) is linked at Asn-68.

The protein belongs to the plant rapid alkalinization factor (RALF) family.

The protein localises to the secreted. Its function is as follows. Cell signaling peptide that may regulate plant stress, growth, and development. Mediates a rapid alkalinization of extracellular space by mediating a transient increase in the cytoplasmic Ca(2+) concentration leading to a calcium-dependent signaling events through a cell surface receptor and a concomitant activation of some intracellular mitogen-activated protein kinases. This is Protein RALF-like 35 from Arabidopsis thaliana (Mouse-ear cress).